Consider the following 375-residue polypeptide: Naringenin 7-O-methyltransferase (375 aa).

136–142 (LNLDKVF) provides a ligand contact to substrate. The interval 168–188 (LFQYLGQDGNEPSNTLFNQAM) is substrate binding. 4 residues coordinate S-adenosyl-L-methionine: glycine 219, aspartate 242, methionine 263, and lysine 276. The active-site Proton acceptor is histidine 280.

The protein belongs to the class I-like SAM-binding methyltransferase superfamily. Cation-independent O-methyltransferase family. COMT subfamily.

The enzyme catalyses (2S)-naringenin + S-adenosyl-L-methionine = (2S)-sakuranetin + S-adenosyl-L-homocysteine + H(+). S-adenosyl-L-methionine-dependent methyltransferase involved in the biosynthesis of the sakuranetin, an inducible defense mechanism of O.sativa against pathogen attack. This is Naringenin 7-O-methyltransferase from Oryza sativa subsp. japonica (Rice).